The chain runs to 561 residues: MRHCINCCIQLFPEDAHKQQVACQGGPHHSHQACPSCKGEDKILFRVDSKQMNLLAVLEVRTEGNENWGGFLRFRKGKRCSLVFGLIIMTLVMASYILSGAHQELLISSPFHYGGFPSNPSVMDSESPSDVKEHHYQPSVNNISYVKDYPNIKLIIDSIAARNEFTTRQLPDLQDLKRQELHMFSVIPNKFLPTSKSPCWYEEFSGRNTTDPYLTNSYVLYSKRFRSTFDTLRKAFWGHLSHVHGKHFRLRCLPHFYIIGQPKCGTTDLYDRLRLHPEVKFSAIKEPHWWTRKRFGIVRLRDGLRDRYPVEDYLDLFDLAAHQIHQGLQAASAEQTSKMNRIIIGEASASTMWDNNAWTFFYDNSTDGEPPFLTQDFIHAFQPEAKLLVMLRDPVERLYSDYLYFASSNKSADDFHEKVTEALQLFENCMLDYSLRACVYNNTLNNAMPVRLQVGLYAVYLLDWLTVFSKEQFLILRLEDHASNVKYTMHKVFQFLNLGPLSEKQEALMTKSPASNTRRPEDRSLGPMWPITQKILRDFYGPFNTRLAQVLDDEAFAWKTT.

Topologically, residues 1–80 are cytoplasmic; sequence MRHCINCCIQ…FLRFRKGKRC (80 aa). The helical; Signal-anchor for type II membrane protein transmembrane segment at 81–101 threads the bilayer; the sequence is SLVFGLIIMTLVMASYILSGA. The Lumenal portion of the chain corresponds to 102–561; that stretch reads HQELLISSPF…DDEAFAWKTT (460 aa). 263–267 contributes to the 3'-phosphoadenylyl sulfate binding site; that stretch reads KCGTT. N-linked (GlcNAc...) asparagine glycosylation is present at asparagine 364. 3'-phosphoadenylyl sulfate is bound by residues arginine 392 and serine 400.

This sequence belongs to the sulfotransferase 1 family. Homodimer; disulfide-linked (Potential). The relevance of homodimerization is however unsure. May interact with phosphorylated proteins in resting B-cells, including HCK. It depends on a divalent metal cation as a cofactor. Glutathione serves as cofactor. Post-translationally, glycosylated.

It is found in the golgi apparatus membrane. It carries out the reaction dermatan 4'-sulfate + n 3'-phosphoadenylyl sulfate = dermatan 4',6'-bissulfate + n adenosine 3',5'-bisphosphate + n H(+). It catalyses the reaction chondroitin 4'-sulfate + n 3'-phosphoadenylyl sulfate = chondroitin 4',6'-bissulfate + n adenosine 3',5'-bisphosphate + n H(+). With respect to regulation, inhibited by phenyl beta-GalNAc(4,6-SO(4)). In terms of biological role, sulfotransferase that transfers sulfate from 3'-phosphoadenosine 5'-phosphosulfate (PAPS) to the C-6 hydroxyl group of the GalNAc 4-sulfate residue of chondroitin sulfate A and forms chondroitin sulfate E containing GlcA-GalNAc(4,6-SO(4)) repeating units. It also transfers sulfate to a unique non-reducing terminal sequence, GalNAc(4SO4)-GlcA(2SO4)-GalNAc(6SO4), to yield a highly sulfated structure similar to the structure found in thrombomodulin chondroitin sulfate. May also act as a B-cell receptor involved in BCR ligation-mediated early activation that mediate regulatory signals key to B-cell development and/or regulation of B-cell-specific RAG expression; however such results are unclear in vivo. The sequence is that of Carbohydrate sulfotransferase 15 (Chst15) from Rattus norvegicus (Rat).